A 152-amino-acid polypeptide reads, in one-letter code: Mitochondrial holo-[acyl-carrier-protein] synthase (152 aa).

This sequence belongs to the P-Pant transferase superfamily. AcpS family.

Its subcellular location is the mitochondrion. The catalysed reaction is apo-[ACP] + CoA = holo-[ACP] + adenosine 3',5'-bisphosphate + H(+). Its function is as follows. Transfers the 4'-phosphopantetheine moiety from coenzyme A to a Ser of mitochondrial acyl-carrier-protein. This is Mitochondrial holo-[acyl-carrier-protein] synthase (PPT2) from Candida glabrata (strain ATCC 2001 / BCRC 20586 / JCM 3761 / NBRC 0622 / NRRL Y-65 / CBS 138) (Yeast).